A 706-amino-acid polypeptide reads, in one-letter code: DNA ligase (706 aa).

The segment at M1–A20 is disordered. NAD(+) contacts are provided by residues D50–D54, S99–L100, and E128. K130 (N6-AMP-lysine intermediate) is an active-site residue. Positions 151, 188, 304, and 328 each coordinate NAD(+). The Zn(2+) site is built by C422, C425, C440, and C446. A BRCT domain is found at E604–P694.

It belongs to the NAD-dependent DNA ligase family. LigA subfamily. The cofactor is Mg(2+). It depends on Mn(2+) as a cofactor.

The enzyme catalyses NAD(+) + (deoxyribonucleotide)n-3'-hydroxyl + 5'-phospho-(deoxyribonucleotide)m = (deoxyribonucleotide)n+m + AMP + beta-nicotinamide D-nucleotide.. Functionally, DNA ligase that catalyzes the formation of phosphodiester linkages between 5'-phosphoryl and 3'-hydroxyl groups in double-stranded DNA using NAD as a coenzyme and as the energy source for the reaction. It is essential for DNA replication and repair of damaged DNA. This chain is DNA ligase, found in Frankia casuarinae (strain DSM 45818 / CECT 9043 / HFP020203 / CcI3).